The sequence spans 91 residues: MEYEYPIDLDWSNEEMILVINFFNHVEKYYESGVTAGDFMDAYKRFKEIVPAKAEEKQIFNTFEKSSGYNSYKAVQDVKTHSEEQRVTAKK.

Belongs to the UPF0223 family.

This is UPF0223 protein SAR1071 from Staphylococcus aureus (strain MRSA252).